A 291-amino-acid polypeptide reads, in one-letter code: 4-diphosphocytidyl-2-C-methyl-D-erythritol kinase (291 aa).

Lys14 is a catalytic residue. 96–106 is an ATP binding site; the sequence is PFGAGLGGGSS. Asp138 is a catalytic residue.

The protein belongs to the GHMP kinase family. IspE subfamily.

The enzyme catalyses 4-CDP-2-C-methyl-D-erythritol + ATP = 4-CDP-2-C-methyl-D-erythritol 2-phosphate + ADP + H(+). The protein operates within isoprenoid biosynthesis; isopentenyl diphosphate biosynthesis via DXP pathway; isopentenyl diphosphate from 1-deoxy-D-xylulose 5-phosphate: step 3/6. In terms of biological role, catalyzes the phosphorylation of the position 2 hydroxy group of 4-diphosphocytidyl-2C-methyl-D-erythritol. This is 4-diphosphocytidyl-2-C-methyl-D-erythritol kinase from Chlorobium phaeovibrioides (strain DSM 265 / 1930) (Prosthecochloris vibrioformis (strain DSM 265)).